We begin with the raw amino-acid sequence, 361 residues long: Mitogen-activated protein kinase 14A (361 aa).

A Protein kinase domain is found at 25 to 309 (YQNLSPVGSG…AAEALAHPYF (285 aa)). Residues 31–39 (VGSGAYGSV) and Lys54 contribute to the ATP site. Residue Asp169 is the Proton acceptor of the active site. Phosphothreonine; by MAP2K3 is present on Thr181. The TXY signature appears at 181-183 (TGY). Phosphotyrosine; by MAP2K3 is present on Tyr183.

It belongs to the protein kinase superfamily. CMGC Ser/Thr protein kinase family. MAP kinase subfamily. Mg(2+) serves as cofactor. Dually phosphorylated on Thr-181 and Tyr-183, which activates the enzyme.

The protein resides in the cytoplasm. It localises to the nucleus. It carries out the reaction L-seryl-[protein] + ATP = O-phospho-L-seryl-[protein] + ADP + H(+). It catalyses the reaction L-threonyl-[protein] + ATP = O-phospho-L-threonyl-[protein] + ADP + H(+). Its activity is regulated as follows. Activated by threonine and tyrosine phosphorylation by the dual specificity kinase, MKK3. In terms of biological role, serine/threonine kinase which acts as an essential component of the MAP kinase signal transduction pathway. Mapk14a is one of the four p38 MAPKs which play an important role in the cascades of cellular responses evoked by extracellular stimuli such as pro-inflammatory cytokines or physical stress leading to direct activation of transcription factors. Accordingly, p38 MAPKs phosphorylate a broad range of proteins and it has been estimated that they may have approximately 200 to 300 substrates each. Some of the targets are downstream kinases which are activated through phosphorylation and further phosphorylate additional targets. Required for cytokinesis on the future dorsal side of the blastodisc, suggesting a role in symmetrical and synchronous blastomere cleavage. This Danio rerio (Zebrafish) protein is Mitogen-activated protein kinase 14A (mapk14a).